Here is a 420-residue protein sequence, read N- to C-terminus: Probable serine hydroxymethyltransferase (420 aa).

(6S)-5,6,7,8-tetrahydrofolate-binding positions include Leu-121 and 125 to 127 (GHL). Residue Lys-230 is modified to N6-(pyridoxal phosphate)lysine. Residues Glu-246 and 354 to 356 (SPF) each bind (6S)-5,6,7,8-tetrahydrofolate.

This sequence belongs to the SHMT family. Homodimer. It depends on pyridoxal 5'-phosphate as a cofactor.

The protein localises to the cytoplasm. It carries out the reaction (6R)-5,10-methylene-5,6,7,8-tetrahydrofolate + glycine + H2O = (6S)-5,6,7,8-tetrahydrofolate + L-serine. The protein operates within one-carbon metabolism; tetrahydrofolate interconversion. Its function is as follows. Catalyzes the reversible interconversion of serine and glycine with tetrahydrofolate (THF) serving as the one-carbon carrier. This reaction serves as the major source of one-carbon groups required for the biosynthesis of purines, thymidylate, methionine, and other important biomolecules. The sequence is that of Probable serine hydroxymethyltransferase from Rickettsia bellii (strain RML369-C).